Reading from the N-terminus, the 319-residue chain is Acetyl-coenzyme A carboxylase carboxyl transferase subunit alpha (319 aa).

The CoA carboxyltransferase C-terminal domain occupies 39 to 293; it reads RLQKKSNDLT…KAVLEKQLHE (255 aa).

Belongs to the AccA family. In terms of assembly, acetyl-CoA carboxylase is a heterohexamer composed of biotin carboxyl carrier protein (AccB), biotin carboxylase (AccC) and two subunits each of ACCase subunit alpha (AccA) and ACCase subunit beta (AccD).

The protein resides in the cytoplasm. It catalyses the reaction N(6)-carboxybiotinyl-L-lysyl-[protein] + acetyl-CoA = N(6)-biotinyl-L-lysyl-[protein] + malonyl-CoA. It functions in the pathway lipid metabolism; malonyl-CoA biosynthesis; malonyl-CoA from acetyl-CoA: step 1/1. Its function is as follows. Component of the acetyl coenzyme A carboxylase (ACC) complex. First, biotin carboxylase catalyzes the carboxylation of biotin on its carrier protein (BCCP) and then the CO(2) group is transferred by the carboxyltransferase to acetyl-CoA to form malonyl-CoA. This chain is Acetyl-coenzyme A carboxylase carboxyl transferase subunit alpha, found in Neisseria meningitidis serogroup C / serotype 2a (strain ATCC 700532 / DSM 15464 / FAM18).